The following is a 172-amino-acid chain: Crossover junction endodeoxyribonuclease RuvC (172 aa).

Residues D11, E71, and D143 contribute to the active site. Mg(2+)-binding residues include D11, E71, and D143.

Belongs to the RuvC family. As to quaternary structure, homodimer which binds Holliday junction (HJ) DNA. The HJ becomes 2-fold symmetrical on binding to RuvC with unstacked arms; it has a different conformation from HJ DNA in complex with RuvA. In the full resolvosome a probable DNA-RuvA(4)-RuvB(12)-RuvC(2) complex forms which resolves the HJ. Requires Mg(2+) as cofactor.

It localises to the cytoplasm. It carries out the reaction Endonucleolytic cleavage at a junction such as a reciprocal single-stranded crossover between two homologous DNA duplexes (Holliday junction).. Its function is as follows. The RuvA-RuvB-RuvC complex processes Holliday junction (HJ) DNA during genetic recombination and DNA repair. Endonuclease that resolves HJ intermediates. Cleaves cruciform DNA by making single-stranded nicks across the HJ at symmetrical positions within the homologous arms, yielding a 5'-phosphate and a 3'-hydroxyl group; requires a central core of homology in the junction. The consensus cleavage sequence is 5'-(A/T)TT(C/G)-3'. Cleavage occurs on the 3'-side of the TT dinucleotide at the point of strand exchange. HJ branch migration catalyzed by RuvA-RuvB allows RuvC to scan DNA until it finds its consensus sequence, where it cleaves and resolves the cruciform DNA. This chain is Crossover junction endodeoxyribonuclease RuvC, found in Brucella anthropi (strain ATCC 49188 / DSM 6882 / CCUG 24695 / JCM 21032 / LMG 3331 / NBRC 15819 / NCTC 12168 / Alc 37) (Ochrobactrum anthropi).